Here is a 65-residue protein sequence, read N- to C-terminus: uncharacterized protein (65 aa).

This is an uncharacterized protein from Homo sapiens (Human).